We begin with the raw amino-acid sequence, 131 residues long: Small ribosomal subunit protein uS11 (131 aa).

Belongs to the universal ribosomal protein uS11 family. Part of the 30S ribosomal subunit. Interacts with proteins S7 and S18. Binds to IF-3. Interacts with VmlR. Interacts with BrxC.

Its function is as follows. Located on the platform of the 30S subunit, it bridges several disparate RNA helices of the 16S rRNA. Forms part of the Shine-Dalgarno cleft in the 70S ribosome. The polypeptide is Small ribosomal subunit protein uS11 (Bacillus subtilis (strain 168)).